A 905-amino-acid polypeptide reads, in one-letter code: Protein translocase subunit SecA (905 aa).

ATP is bound by residues Gln-89, 107–111 (GEGKT), and Asp-502. Residues Cys-887, Cys-889, Cys-898, and His-899 each coordinate Zn(2+).

It belongs to the SecA family. Monomer and homodimer. Part of the essential Sec protein translocation apparatus which comprises SecA, SecYEG and auxiliary proteins SecDF-YajC and YidC. Zn(2+) is required as a cofactor.

It localises to the cell inner membrane. The protein resides in the cytoplasm. It carries out the reaction ATP + H2O + cellular proteinSide 1 = ADP + phosphate + cellular proteinSide 2.. Part of the Sec protein translocase complex. Interacts with the SecYEG preprotein conducting channel. Has a central role in coupling the hydrolysis of ATP to the transfer of proteins into and across the cell membrane, serving both as a receptor for the preprotein-SecB complex and as an ATP-driven molecular motor driving the stepwise translocation of polypeptide chains across the membrane. In Rhizobium leguminosarum bv. trifolii (strain WSM2304), this protein is Protein translocase subunit SecA.